We begin with the raw amino-acid sequence, 539 residues long: Gamma-2-syntrophin (539 aa).

The PDZ domain occupies threonine 73–arginine 156. Residues glutamine 296 to phenylalanine 421 form the PH domain.

Belongs to the syntrophin family. In terms of assembly, interacts with the dystrophin protein DMD and related proteins DTNA and DTNB.

It is found in the cell membrane. It localises to the sarcolemma. The protein resides in the cytoplasm. Its subcellular location is the cytoskeleton. Its function is as follows. Adapter protein that binds to and probably organizes the subcellular localization of a variety of proteins. May link various receptors to the actin cytoskeleton and the dystrophin glycoprotein complex. In Mus musculus (Mouse), this protein is Gamma-2-syntrophin (Sntg2).